Consider the following 212-residue polypeptide: Golgi SNAP receptor complex member 2 homolog memb-1 (212 aa).

The Cytoplasmic segment spans residues 1–189 (MEAQYQSTNF…QVIDRRVRED (189 aa)). Residues 190 to 210 (WIFVIGCIVCCIFMYAFYRFW) form a helical; Anchor for type IV membrane protein membrane-spanning segment. The Vesicular segment spans residues 211 to 212 (RG).

It belongs to the GOSR2 family. As to quaternary structure, part of a unique SNARE complex.

The protein resides in the golgi apparatus. The protein localises to the cis-Golgi network membrane. Its subcellular location is the golgi apparatus membrane. It localises to the endoplasmic reticulum membrane. In terms of biological role, involved in transport of proteins from the cis/medial-Golgi to the trans-Golgi network. The polypeptide is Golgi SNAP receptor complex member 2 homolog memb-1 (Caenorhabditis briggsae).